The primary structure comprises 188 residues: dCTP deaminase (188 aa).

Residues 111–116 (KSTYAR), 135–137 (TLE), Q156, Y170, and Q180 contribute to the dCTP site. Residue E137 is the Proton donor/acceptor of the active site.

The protein belongs to the dCTP deaminase family. In terms of assembly, homotrimer.

It carries out the reaction dCTP + H2O + H(+) = dUTP + NH4(+). Its pathway is pyrimidine metabolism; dUMP biosynthesis; dUMP from dCTP (dUTP route): step 1/2. Functionally, catalyzes the deamination of dCTP to dUTP. This is dCTP deaminase from Cupriavidus necator (strain ATCC 17699 / DSM 428 / KCTC 22496 / NCIMB 10442 / H16 / Stanier 337) (Ralstonia eutropha).